The chain runs to 514 residues: Peptide chain release factor 3 (514 aa).

Positions 8–268 (KKRRTFAIIS…TFLEFAPEPH (261 aa)) constitute a tr-type G domain. GTP-binding positions include 17 to 24 (SHPDAGKT), 85 to 89 (DTPGH), and 139 to 142 (NKLD).

This sequence belongs to the TRAFAC class translation factor GTPase superfamily. Classic translation factor GTPase family. PrfC subfamily.

The protein localises to the cytoplasm. In terms of biological role, increases the formation of ribosomal termination complexes and stimulates activities of RF-1 and RF-2. It binds guanine nucleotides and has strong preference for UGA stop codons. It may interact directly with the ribosome. The stimulation of RF-1 and RF-2 is significantly reduced by GTP and GDP, but not by GMP. This Streptococcus uberis (strain ATCC BAA-854 / 0140J) protein is Peptide chain release factor 3.